Reading from the N-terminus, the 422-residue chain is NADP-dependent malic enzyme (422 aa).

Tyr-39 (proton donor) is an active-site residue. Lys-94 acts as the Proton acceptor in catalysis. Residue Lys-94 participates in substrate binding. Glu-136, Asp-137, and Asp-162 together coordinate a divalent metal cation. NADP(+)-binding positions include 195-198 (AGAA), Asn-286, and Asn-318. Asn-318 is a substrate binding site.

It belongs to the malic enzymes family. Mg(2+) serves as cofactor. The cofactor is Mn(2+).

It catalyses the reaction (S)-malate + NADP(+) = pyruvate + CO2 + NADPH. The enzyme catalyses oxaloacetate + H(+) = pyruvate + CO2. This Halomonas elongata (strain ATCC 33173 / DSM 2581 / NBRC 15536 / NCIMB 2198 / 1H9) protein is NADP-dependent malic enzyme.